Consider the following 498-residue polypeptide: ATP synthase subunit beta, chloroplastic (498 aa).

172-179 (GGAGVGKT) contacts ATP.

This sequence belongs to the ATPase alpha/beta chains family. As to quaternary structure, F-type ATPases have 2 components, CF(1) - the catalytic core - and CF(0) - the membrane proton channel. CF(1) has five subunits: alpha(3), beta(3), gamma(1), delta(1), epsilon(1). CF(0) has four main subunits: a(1), b(1), b'(1) and c(9-12).

The protein resides in the plastid. Its subcellular location is the chloroplast thylakoid membrane. The catalysed reaction is ATP + H2O + 4 H(+)(in) = ADP + phosphate + 5 H(+)(out). Functionally, produces ATP from ADP in the presence of a proton gradient across the membrane. The catalytic sites are hosted primarily by the beta subunits. The protein is ATP synthase subunit beta, chloroplastic of Nicotiana rustica (Aztec tobacco).